The chain runs to 357 residues: Thiamine thiazole synthase, chloroplastic (357 aa).

Residues Ala-102, Glu-123–Gln-124, Gly-131, and Val-196 contribute to the substrate site. A 2,3-didehydroalanine (Cys) modification is found at Cys-233. Substrate-binding positions include Asp-235, His-250, Met-304, and Arg-314–Gly-316.

Belongs to the THI4 family. As to quaternary structure, homooctamer. It depends on Fe cation as a cofactor. During the catalytic reaction, a sulfide is transferred from Cys-233 to a reaction intermediate, generating a dehydroalanine residue.

The protein resides in the plastid. The protein localises to the chloroplast. It carries out the reaction [ADP-thiazole synthase]-L-cysteine + glycine + NAD(+) = [ADP-thiazole synthase]-dehydroalanine + ADP-5-ethyl-4-methylthiazole-2-carboxylate + nicotinamide + 3 H2O + 2 H(+). Its function is as follows. Involved in biosynthesis of the thiamine precursor thiazole. Catalyzes the conversion of NAD and glycine to adenosine diphosphate 5-(2-hydroxyethyl)-4-methylthiazole-2-carboxylic acid (ADT), an adenylated thiazole intermediate. The reaction includes an iron-dependent sulfide transfer from a conserved cysteine residue of the protein to a thiazole intermediate. The enzyme can only undergo a single turnover, which suggests it is a suicide enzyme. May have additional roles in adaptation to various stress conditions and in DNA damage tolerance. This is Thiamine thiazole synthase, chloroplastic from Chlamydomonas reinhardtii (Chlamydomonas smithii).